The sequence spans 175 residues: Alpha-crystallin B chain (175 aa).

Residue M1 is modified to N-acetylmethionine. Phosphoserine occurs at positions 19, 45, and 59. The region spanning 56 to 164 is the sHSP domain; the sequence is RAPSWIDTGL…PERTIPITRE (109 aa). H83 lines the Zn(2+) pocket. Position 92 is an N6-acetyllysine (K92). 4 residues coordinate Zn(2+): H104, E106, H111, and H119. Residues 142-175 are disordered; that stretch reads VLTVNGPRKQASGPERTIPITREEKPAVTAAPKK. K166 carries the N6-acetyllysine modification. The O-linked (GlcNAc) threonine glycan is linked to T170.

Belongs to the small heat shock protein (HSP20) family. Heteromer composed of three CRYAA and one CRYAB subunits. Aggregates with homologous proteins, including the small heat shock protein HSPB1, to form large heteromeric complexes. Inter-subunit bridging via zinc ions enhances stability, which is crucial as there is no protein turn over in the lens. Interacts with HSPBAP1. Interacts with TTN/titin. Interacts with TMEM109; in the cellular response to DNA damage. Interacts with DES; binds rapidly during early stages of DES filament assembly and a reduced binding seen in the later stages. Interacts with TMED10; the interaction mediates the translocation from the cytoplasm into the ERGIC (endoplasmic reticulum-Golgi intermediate compartment) and thereby secretion. Interacts with ATP6V1A and with MTOR, forming a ternary complex. As to expression, lens as well as other tissues.

It localises to the cytoplasm. The protein resides in the nucleus. The protein localises to the secreted. It is found in the lysosome. May contribute to the transparency and refractive index of the lens. Has chaperone-like activity, preventing aggregation of various proteins under a wide range of stress conditions. In lens epithelial cells, stabilizes the ATP6V1A protein, preventing its degradation by the proteasome. This chain is Alpha-crystallin B chain, found in Rattus norvegicus (Rat).